We begin with the raw amino-acid sequence, 866 residues long: DNA replication licensing factor MCM4 (866 aa).

3 disordered regions span residues 1–67, 81–107, and 124–145; these read MSSP…TSPA, SPLN…TPLR, and GGGS…PVSE. Polar residues-rich tracts occupy residues 47–63 and 81–93; these read DNIS…SLPA and SPLN…SMGS. 2 positions are modified to phosphoserine: Ser55 and Ser81. Residue Thr87 is modified to Phosphothreonine. An MCM domain is found at 460–669; the sequence is IYDRLARAIA…FDKRLASHLV (210 aa). ATP is bound at residue 512–519; the sequence is GDPGTSKS. An Arginine finger motif is present at residues 644–647; sequence SRFD.

It belongs to the MCM family. Component of the Mcm2-7 complex. The complex forms a toroidal hexameric ring with the proposed subunit order Mcm2-Mcm6-Mcm4-Mcm7-Mcm3-Mcm5. Post-translationally, phosphorylated by the catalytic component of the Dbf4-dependent kinase (DDK) complex Cdc7.

It localises to the nucleus. The catalysed reaction is ATP + H2O = ADP + phosphate + H(+). In terms of biological role, acts as a component of the Mcm2-7 complex (Mcm complex) which is the putative replicative helicase essential for 'once per cell cycle' DNA replication initiation and elongation in eukaryotic cells. The active ATPase sites in the Mcm2-7 ring are formed through the interaction surfaces of two neighboring subunits such that a critical structure of a conserved arginine finger motif is provided in trans relative to the ATP-binding site of the Walker A box of the adjacent subunit. The six ATPase active sites, however, are likely to contribute differentially to the complex helicase activity. Required for DNA replication and cell proliferation. Essential role in mitotic DNA replication but not in endoreplication. The polypeptide is DNA replication licensing factor MCM4 (dpa) (Drosophila melanogaster (Fruit fly)).